The following is a 323-amino-acid chain: Porphobilinogen deaminase (323 aa).

Position 240 is an S-(dipyrrolylmethanemethyl)cysteine (C240).

This sequence belongs to the HMBS family. Monomer. Dipyrromethane is required as a cofactor.

The enzyme catalyses 4 porphobilinogen + H2O = hydroxymethylbilane + 4 NH4(+). It functions in the pathway porphyrin-containing compound metabolism; protoporphyrin-IX biosynthesis; coproporphyrinogen-III from 5-aminolevulinate: step 2/4. Functionally, tetrapolymerization of the monopyrrole PBG into the hydroxymethylbilane pre-uroporphyrinogen in several discrete steps. The sequence is that of Porphobilinogen deaminase from Sulfurovum sp. (strain NBC37-1).